The sequence spans 483 residues: Inositol-pentakisphosphate 2-kinase (483 aa).

Positions 140 to 144 (EIKPK) match the EXKPK motif motif. The interval 279 to 298 (SNRSGEPRKMHLSESKPHCE) is disordered. Positions 281–297 (RSGEPRKMHLSESKPHC) are enriched in basic and acidic residues.

It belongs to the IPK1 type 2 family. Expressed both maternally and zygotically. Expressed in cleavage-stage embryos. Ubiquitously distributed throughout blastula stages of embryogenesis. At the onset of gastrulation, it is enriched in cells around the blastoderm margin. At shield stage, expression is detected in the deep involuted cells that contribute to mesendoderm. During mid and late gastrula stages, it is strongly expressed in axial mesendoderm. However, it is not present in the nascent tailbud at yolk plug closure (YPC) stage. Expression in axial mesendoderm is reduced at the 2 somite stage (SS). At 6 SS, it is expressed in cells surrounding Kupffer's vesicle, but apparently not within. By 10 SS, it is no longer detected as a specific signal above background.

The protein resides in the cytoplasm. Its subcellular location is the nucleus. It carries out the reaction 1D-myo-inositol 1,3,4,5,6-pentakisphosphate + ATP = 1D-myo-inositol hexakisphosphate + ADP + H(+). In terms of biological role, phosphorylates Ins(1,3,4,5,6)P5 at position 2 to form Ins(1,2,3,4,5,6)P6 (InsP6 or phytate). InsP6 is involved in many processes such as mRNA export, non-homologous end-joining, endocytosis and ion channel regulation. InsP6 also acts as a key regulator of left-right asymmetry in embryo, probably by regulating asymmetric Ca(2+) during left-right specification. The chain is Inositol-pentakisphosphate 2-kinase (ippk) from Danio rerio (Zebrafish).